A 438-amino-acid chain; its full sequence is Exodeoxyribonuclease 7 large subunit (438 aa).

Residues Ala-406 to Ser-438 form a disordered region.

The protein belongs to the XseA family. Heterooligomer composed of large and small subunits.

The protein resides in the cytoplasm. It catalyses the reaction Exonucleolytic cleavage in either 5'- to 3'- or 3'- to 5'-direction to yield nucleoside 5'-phosphates.. Its function is as follows. Bidirectionally degrades single-stranded DNA into large acid-insoluble oligonucleotides, which are then degraded further into small acid-soluble oligonucleotides. The sequence is that of Exodeoxyribonuclease 7 large subunit from Clavibacter sepedonicus (Clavibacter michiganensis subsp. sepedonicus).